A 501-amino-acid polypeptide reads, in one-letter code: COP9 signalosome complex subunit 3 (501 aa).

Residues 275–445 (RFEDALFLLE…VFWTELSPVP (171 aa)) form the PCI domain.

The protein belongs to the CSN3 family. Component of the CSN complex, probably composed of csn-1, csn-2, csn-3, csn-4, csn-5, csn-6 and csn-7. Within the complex it probably interacts directly with csn-2 and csn-4. May interact with itself.

The protein resides in the cytoplasm. It is found in the nucleus. Component of the COP9 signalosome complex (CSN), a complex involved in various cellular and developmental processes. The CSN complex is an essential regulator of the ubiquitin (Ubl) conjugation pathway by mediating the deneddylation of the cullin subunits of the SCF-type E3 ligase complexes, leading to decrease the Ubl ligase activity of SCF. The CSN complex plays an essential role in embryogenesis and oogenesis and is required to regulate microtubule stability in the early embryo. Mediates mei-3/katanin targeting for degradation at the meiosis to mitosis transition via deneddylation of cul-3. The polypeptide is COP9 signalosome complex subunit 3 (csn-3) (Caenorhabditis elegans).